A 548-amino-acid chain; its full sequence is Folylpolyglutamate synthase (548 aa).

130 to 133 (GKGS) contributes to the ATP binding site. Mg(2+)-binding residues include S157, E234, and H262. ATP-binding residues include R382 and D396.

Belongs to the folylpolyglutamate synthase family. A monovalent cation serves as cofactor.

It localises to the mitochondrion inner membrane. It is found in the mitochondrion matrix. Its subcellular location is the cytoplasm. The catalysed reaction is (6S)-5,6,7,8-tetrahydrofolyl-(gamma-L-Glu)(n) + L-glutamate + ATP = (6S)-5,6,7,8-tetrahydrofolyl-(gamma-L-Glu)(n+1) + ADP + phosphate + H(+). The protein operates within cofactor biosynthesis; tetrahydrofolylpolyglutamate biosynthesis. Its function is as follows. Catalyzes conversion of folates to polyglutamate derivatives allowing concentration of folate compounds in the cell and the intracellular retention of these cofactors, which are important substrates for most of the folate-dependent enzymes that are involved in one-carbon transfer reactions involved in purine, pyrimidine and amino acid synthesis. Required for methionine synthesis and maintenance of intact mitochondrial DNA. Involved in telomere maintenance. The protein is Folylpolyglutamate synthase of Saccharomyces cerevisiae (strain AWRI796) (Baker's yeast).